The chain runs to 101 residues: MTFRYSNIAHTLFISIMCLFSIPLCFSLSIFFFLSSHSLSFAIHCYAPLSTSLHCGWPHKVDMQYFFPWSRILRPTWVGRALLSKGGVIEMLGGEAGMLGK.

A helical membrane pass occupies residues 13-33 (FISIMCLFSIPLCFSLSIFFF).

The protein resides in the membrane. This is an uncharacterized protein from Schizosaccharomyces pombe (strain 972 / ATCC 24843) (Fission yeast).